We begin with the raw amino-acid sequence, 1146 residues long: Probable phospholipid-transporting ATPase IIB (1146 aa).

Residues 1–143 (MADQIPLYPV…IKNQKYNVFT (143 aa)) are Cytoplasmic-facing. The helical transmembrane segment at 144–164 (FIPGVLYEQFKFFLNLYFLVV) threads the bilayer. Topologically, residues 165–172 (SCSQFVPA) are extracellular. Residues 173–193 (LKIGYLYTYWAPLGFVLAVTI) form a helical membrane-spanning segment. Topologically, residues 194 to 381 (AREAIDEFRR…LDLELNQLTK (188 aa)) are cytoplasmic. Residues 382–402 (ALFLALVVLSVVMVTLQGFAG) traverse the membrane as a helical segment. Topologically, residues 403-407 (PWYRN) are extracellular. The chain crosses the membrane as a helical span at residues 408-427 (LFRFLLLFSYIIPISLRVNL). The Cytoplasmic segment spans residues 428–938 (DMGKAAYGWM…ALGQFVMHRG (511 aa)). Asp-467 serves as the catalytic 4-aspartylphosphate intermediate. The ATP site is built by Asp-467, Lys-468, and Thr-469. Asp-467 is a Mg(2+) binding site. Thr-469 lines the Mg(2+) pocket. The segment covering 508–519 (VHSQPSGHNPSS) has biased composition (polar residues). Residues 508–535 (VHSQPSGHNPSSAPLRRSQSSTPKVKKS) form a disordered region. Glu-590, Phe-632, Lys-637, Lys-656, Arg-685, Thr-686, Thr-765, Gly-766, Asp-767, Arg-847, and Lys-853 together coordinate ATP. Position 873 (Asp-873) interacts with Mg(2+). ATP is bound by residues Asn-876 and Asp-877. Residue Asp-877 coordinates Mg(2+). The chain crosses the membrane as a helical span at residues 939–959 (LIISTMQAVFSSVFYFASVPL). Topologically, residues 960–961 (YQ) are extracellular. A helical membrane pass occupies residues 962-982 (GFLMVGYATIYTMFPVFSLVL). The Cytoplasmic portion of the chain corresponds to 983–1011 (DQDVKPEMAILYPELYKDLTKGRSLSFKT). The chain crosses the membrane as a helical span at residues 1012-1032 (FLIWVLISIYQGGILMYGALL). Residues 1033 to 1040 (LFEDEFVH) lie on the Extracellular side of the membrane. The helical transmembrane segment at 1041–1061 (VVAISFTALILTELLMVALTI) threads the bilayer. At 1062–1065 (RTWH) the chain is on the cytoplasmic side. A helical transmembrane segment spans residues 1066-1086 (WLMVVAEFLSLGCYVASLAFL). The Extracellular segment spans residues 1087 to 1105 (NEYFGIGRVSFGAFLDVAF). The helical transmembrane segment at 1106-1128 (ITTVTFLWKVSAITVVSCLPLYV) threads the bilayer. Topologically, residues 1129 to 1146 (LKYLKRKLSPPSYSKLSS) are cytoplasmic.

Belongs to the cation transport ATPase (P-type) (TC 3.A.3) family. Type IV subfamily. Mg(2+) serves as cofactor. Found in most tissues except spleen and muscle. Most abundant in testis. Also detected in fetal tissues.

It is found in the golgi apparatus. It localises to the trans-Golgi network membrane. It catalyses the reaction ATP + H2O + phospholipidSide 1 = ADP + phosphate + phospholipidSide 2.. The chain is Probable phospholipid-transporting ATPase IIB (Atp9b) from Mus musculus (Mouse).